Reading from the N-terminus, the 228-residue chain is Ribosomal RNA small subunit methyltransferase G (228 aa).

Residues G89, L94, 140–141 (VE), and R159 contribute to the S-adenosyl-L-methionine site.

It belongs to the methyltransferase superfamily. RNA methyltransferase RsmG family.

It is found in the cytoplasm. It carries out the reaction guanosine(527) in 16S rRNA + S-adenosyl-L-methionine = N(7)-methylguanosine(527) in 16S rRNA + S-adenosyl-L-homocysteine. Specifically methylates the N7 position of guanine in position 527 of 16S rRNA. This chain is Ribosomal RNA small subunit methyltransferase G, found in Burkholderia multivorans (strain ATCC 17616 / 249).